The following is a 119-amino-acid chain: Ribonuclease P protein component (119 aa).

Belongs to the RnpA family. As to quaternary structure, consists of a catalytic RNA component (M1 or rnpB) and a protein subunit.

The catalysed reaction is Endonucleolytic cleavage of RNA, removing 5'-extranucleotides from tRNA precursor.. Functionally, RNaseP catalyzes the removal of the 5'-leader sequence from pre-tRNA to produce the mature 5'-terminus. It can also cleave other RNA substrates such as 4.5S RNA. The protein component plays an auxiliary but essential role in vivo by binding to the 5'-leader sequence and broadening the substrate specificity of the ribozyme. The polypeptide is Ribonuclease P protein component (Aromatoleum aromaticum (strain DSM 19018 / LMG 30748 / EbN1) (Azoarcus sp. (strain EbN1))).